Consider the following 48-residue polypeptide: ATP synthase protein 8 (48 aa).

A helical transmembrane segment spans residues 12–32 (QLTYGLLLITVLLILFSQFFL).

It belongs to the ATPase protein 8 family. F-type ATPases have 2 components, CF(1) - the catalytic core - and CF(0) - the membrane proton channel.

Its subcellular location is the mitochondrion membrane. Its function is as follows. Mitochondrial membrane ATP synthase (F(1)F(0) ATP synthase or Complex V) produces ATP from ADP in the presence of a proton gradient across the membrane which is generated by electron transport complexes of the respiratory chain. F-type ATPases consist of two structural domains, F(1) - containing the extramembraneous catalytic core and F(0) - containing the membrane proton channel, linked together by a central stalk and a peripheral stalk. During catalysis, ATP synthesis in the catalytic domain of F(1) is coupled via a rotary mechanism of the central stalk subunits to proton translocation. Part of the complex F(0) domain. Minor subunit located with subunit a in the membrane. This chain is ATP synthase protein 8 (ATP8), found in Candida glabrata (strain ATCC 2001 / BCRC 20586 / JCM 3761 / NBRC 0622 / NRRL Y-65 / CBS 138) (Yeast).